The sequence spans 548 residues: Rhotekin (548 aa).

The REM-1 domain occupies 10-85 (DLNMLYIRQM…LQRRKEAQVL (76 aa)). Phosphoserine is present on residues Ser22 and Ser93. The segment at 83 to 103 (QVLGKTGRRPSDSVQPPERSP) is disordered. An Asymmetric dimethylarginine modification is found at Arg217. A Phosphoserine modification is found at Ser219. Residues 296–403 (QPTASGTLRV…WMEALWQLFL (108 aa)) enclose the PH domain. 3 positions are modified to phosphoserine: Ser504, Ser513, and Ser528. A disordered region spans residues 506 to 548 (DAVPADHSLGPSRSVAPLPPQRSPQSRGFYSKSQLSTWLQSPV). Residues 528–548 (SPQSRGFYSKSQLSTWLQSPV) are compositionally biased toward polar residues.

As to quaternary structure, interacts via its C-terminal region with the TAX1BP3 PDZ domain. This interaction facilitates Rho-mediated activation of the c-Fos serum response element (SRE). Interacts with SEPT9. Specifically binds to GTP-bound RHOA, RHOB and RHOC and inhibits their GTPase activity.

Mediates Rho signaling to activate NF-kappa-B and may confer increased resistance to apoptosis to cells in gastric tumorigenesis. May play a novel role in the organization of septin structures. This chain is Rhotekin, found in Rattus norvegicus (Rat).